The sequence spans 200 residues: Large ribosomal subunit protein bL25 (200 aa).

2 disordered regions span residues 1–20 and 179–200; these read MTIEFNATKREGQGSSASRR and PVVASAQTTRGAAAAEGEGEAA.

The protein belongs to the bacterial ribosomal protein bL25 family. CTC subfamily. As to quaternary structure, part of the 50S ribosomal subunit; part of the 5S rRNA/L5/L18/L25 subcomplex. Contacts the 5S rRNA. Binds to the 5S rRNA independently of L5 and L18.

In terms of biological role, this is one of the proteins that binds to the 5S RNA in the ribosome where it forms part of the central protuberance. This chain is Large ribosomal subunit protein bL25, found in Azoarcus sp. (strain BH72).